Consider the following 268-residue polypeptide: Hydroxyethylthiazole kinase (268 aa).

M46 is a substrate binding site. Residues R122 and T168 each contribute to the ATP site. G195 serves as a coordination point for substrate.

It belongs to the Thz kinase family. Mg(2+) serves as cofactor.

The catalysed reaction is 5-(2-hydroxyethyl)-4-methylthiazole + ATP = 4-methyl-5-(2-phosphooxyethyl)-thiazole + ADP + H(+). Its pathway is cofactor biosynthesis; thiamine diphosphate biosynthesis; 4-methyl-5-(2-phosphoethyl)-thiazole from 5-(2-hydroxyethyl)-4-methylthiazole: step 1/1. In terms of biological role, catalyzes the phosphorylation of the hydroxyl group of 4-methyl-5-beta-hydroxyethylthiazole (THZ). This is Hydroxyethylthiazole kinase from Desulfatibacillum aliphaticivorans.